Here is a 375-residue protein sequence, read N- to C-terminus: 3-dehydroquinate synthase (375 aa).

NAD(+) is bound by residues 82–87 (SGETSK), 116–120 (GVVGD), 140–141 (TT), lysine 153, and lysine 162. 3 residues coordinate Zn(2+): glutamate 195, histidine 259, and histidine 276.

It belongs to the sugar phosphate cyclases superfamily. Dehydroquinate synthase family. NAD(+) serves as cofactor. Co(2+) is required as a cofactor. The cofactor is Zn(2+).

The protein localises to the cytoplasm. It carries out the reaction 7-phospho-2-dehydro-3-deoxy-D-arabino-heptonate = 3-dehydroquinate + phosphate. It functions in the pathway metabolic intermediate biosynthesis; chorismate biosynthesis; chorismate from D-erythrose 4-phosphate and phosphoenolpyruvate: step 2/7. In terms of biological role, catalyzes the conversion of 3-deoxy-D-arabino-heptulosonate 7-phosphate (DAHP) to dehydroquinate (DHQ). In Rhodopirellula baltica (strain DSM 10527 / NCIMB 13988 / SH1), this protein is 3-dehydroquinate synthase.